The sequence spans 542 residues: POTE ankyrin domain family member C (542 aa).

ANK repeat units follow at residues 138–171 (EDLDKLHRAAWWGKVPRKDLIVMLRDTDMNKRDK), 172–201 (QKRTALHLASANGNSEVVQLLLDRRCQLNV), 205–234 (KKRTALIKAVQCQEDECVLMLLEHGADQNI), 238–267 (YGNTTLHYAVHNEDKLMAKALLLYGADIES), 271–300 (CGLTPLLLGVHEQKQQVVKFLIKKKANLNA), 304–333 (YGRTALILAVCCGSASIVNLLLEQNVDVSS), and 337–373 (SGQTAREYAVSSHHHVICELLSDYKEKQMLKISSENS). Positions 369–494 (SSENSNPEQD…NTGISQDEIL (126 aa)) are disordered. Composition is skewed to basic and acidic residues over residues 377-392 (QDLKLTSEEESQRLKV), 401-412 (MSQEPEINKDCD), and 466-481 (EEYHSDEQNDTRKQLS). Positions 482–494 (EEQNTGISQDEIL) are enriched in polar residues. Positions 489–538 (SQDEILTNKQKQIEVAEKKMNSELSLSHKKEEDLLRENSMLQEEIAMLIS) form a coiled coil.

This sequence belongs to the POTE family. Expressed in prostate and testis.

This is POTE ankyrin domain family member C (POTEC) from Homo sapiens (Human).